The sequence spans 35 residues: Jingzhaotoxin F6-27.63 (35 aa).

3 disulfide bridges follow: cysteine 2–cysteine 17, cysteine 9–cysteine 22, and cysteine 16–cysteine 29.

This sequence belongs to the neurotoxin 10 (Hwtx-1) family. 49 (Jztx-F6) subfamily. As to expression, expressed by the venom gland.

Its subcellular location is the secreted. In terms of biological role, probable ion channel inhibitor. This Chilobrachys guangxiensis (Chinese earth tiger tarantula) protein is Jingzhaotoxin F6-27.63.